The sequence spans 161 residues: Regulator of ribonuclease activity A (161 aa).

Belongs to the RraA family. In terms of assembly, homotrimer. Binds to both RNA-binding sites in the C-terminal region of Rne and to RhlB.

The protein resides in the cytoplasm. Functionally, globally modulates RNA abundance by binding to RNase E (Rne) and regulating its endonucleolytic activity. Can modulate Rne action in a substrate-dependent manner by altering the composition of the degradosome. Modulates RNA-binding and helicase activities of the degradosome. The sequence is that of Regulator of ribonuclease activity A from Shewanella sediminis (strain HAW-EB3).